Reading from the N-terminus, the 130-residue chain is Hypocretin neuropeptide precursor (130 aa).

An N-terminal signal peptide occupies residues methionine 1–alanine 32. Residue glutamine 33 is modified to Pyrrolidone carboxylic acid. 2 cysteine pairs are disulfide-bonded: cysteine 38-cysteine 44 and cysteine 39-cysteine 46. Leucine amide is present on leucine 65. Methionine 96 is subject to Methionine amide. Residues glycine 97–valine 130 constitute a propeptide, removed in mature form.

Belongs to the orexin family. Specific enzymatic cleavages at paired basic residues yield the different active peptides.

It localises to the rough endoplasmic reticulum. The protein resides in the cytoplasmic vesicle. It is found in the synapse. In terms of biological role, neuropeptides that play a significant role in the regulation of food intake and sleep-wakefulness, possibly by coordinating the complex behavioral and physiologic responses of these complementary homeostatic functions. A broader role in the homeostatic regulation of energy metabolism, autonomic function, hormonal balance and the regulation of body fluids, is also suggested. Binds to orexin receptors HCRTR1/OX1R and HCRTR2/OX2R with a high affinity. Stimulates food intake. Modulates pituitary luteinizing hormone secretion in an ovarian steroid-dependent manner. Its function is as follows. Binds to orexin receptor HCRTR2/OX2R only. Stimulates food intake. Modulates pituitary luteinizing hormone secretion in an ovarian steroid-dependent manner. This is Hypocretin neuropeptide precursor (HCRT) from Canis lupus familiaris (Dog).